Reading from the N-terminus, the 37-residue chain is MKVRASVKKMCRNCKVIKRNRVVRVICTDPRHKQRQG.

The protein belongs to the bacterial ribosomal protein bL36 family.

This Francisella tularensis subsp. tularensis (strain FSC 198) protein is Large ribosomal subunit protein bL36.